The following is a 490-amino-acid chain: Cobyric acid synthase (490 aa).

Residues 252–439 (RLKVVVPVLP…LHGLFESTAA (188 aa)) enclose the GATase cobBQ-type domain. Cys-333 acts as the Nucleophile in catalysis. His-431 is a catalytic residue.

The protein belongs to the CobB/CobQ family. CobQ subfamily.

It functions in the pathway cofactor biosynthesis; adenosylcobalamin biosynthesis. Functionally, catalyzes amidations at positions B, D, E, and G on adenosylcobyrinic A,C-diamide. NH(2) groups are provided by glutamine, and one molecule of ATP is hydrogenolyzed for each amidation. The protein is Cobyric acid synthase of Pseudomonas paraeruginosa (strain DSM 24068 / PA7) (Pseudomonas aeruginosa (strain PA7)).